Reading from the N-terminus, the 28-residue chain is DDNGKPYVLPSVRTCGFDFTGAVEDISK.

It belongs to the class-I pyridoxal-phosphate-dependent aminotransferase family. Homodimer. The cofactor is pyridoxal 5'-phosphate.

It is found in the mitochondrion matrix. It carries out the reaction L-aspartate + 2-oxoglutarate = oxaloacetate + L-glutamate. In terms of biological role, plays a key role in amino acid metabolism. Important for metabolite exchange between mitochondria and cytosol. This is Aspartate aminotransferase, mitochondrial from Catharanthus roseus (Madagascar periwinkle).